The following is an 87-amino-acid chain: Small ribosomal subunit protein bS16 (87 aa).

Belongs to the bacterial ribosomal protein bS16 family.

This is Small ribosomal subunit protein bS16 from Ehrlichia ruminantium (strain Gardel).